The following is a 144-amino-acid chain: uncharacterized protein (144 aa).

This is an uncharacterized protein from Vibrio parahaemolyticus serotype O3:K6 (strain RIMD 2210633).